The primary structure comprises 58 residues: Small ribosomal subunit protein bS21 (58 aa).

Residues Glu31–Ser42 are compositionally biased toward basic and acidic residues. Positions Glu31–Asn58 are disordered. Basic residues predominate over residues Val43–Asn58.

The protein belongs to the bacterial ribosomal protein bS21 family.

This chain is Small ribosomal subunit protein bS21, found in Agathobacter rectalis (strain ATCC 33656 / DSM 3377 / JCM 17463 / KCTC 5835 / VPI 0990) (Eubacterium rectale).